The chain runs to 1441 residues: ABC transporter G family member 51 (1441 aa).

Positions 52 to 71 (VLPDPDGLGGGDGGGRGEGQ) are disordered. Residues 58-69 (GLGGGDGGGRGE) show a composition bias toward gly residues. The 275-residue stretch at 154–428 (LISSHLLRPD…FKSLGFSLPP (275 aa)) folds into the ABC transporter 1 domain. ATP is bound at residue 187 to 194 (GPPASGKS). Residues 505 to 718 (SLVRACFARE…AQRAVSVNEF (214 aa)) form the ABC transmembrane type-2 1 domain. A run of 6 helical transmembrane segments spans residues 523 to 543 (FLYT…STLF), 558 to 578 (LYLA…FTEM), 615 to 635 (FIEA…APTV), 642 to 662 (MLLL…MGAI), 668 to 688 (IAST…GFVV), and 751 to 771 (FWIG…MFTL). One can recognise an ABC transporter 2 domain in the interval 838 to 1090 (MTFHNVNYYV…DMINYFQGIP (253 aa)). 883–890 (GASGSGKT) contacts ATP. The 218-residue stretch at 1163 to 1380 (TQFMVCLRKQ…TLRGVITSQL (218 aa)) folds into the ABC transmembrane type-2 2 domain. 7 consecutive transmembrane segments (helical) span residues 1184 to 1204 (VVRL…FWNV), 1214 to 1234 (ILLL…NNAS), 1271 to 1291 (VEIP…YFMV), 1300 to 1320 (LVLY…YGMV), 1330 to 1350 (MASV…GFLI), 1355 to 1375 (IPGW…LRGV), and 1413 to 1433 (ATVA…AISI).

Belongs to the ABC transporter superfamily. ABCG family. PDR (TC 3.A.1.205) subfamily.

It localises to the membrane. In terms of biological role, may be a general defense protein. This is ABC transporter G family member 51 from Oryza sativa subsp. japonica (Rice).